A 166-amino-acid chain; its full sequence is Transmembrane protein 278 (166 aa).

Positions 1–15 (MSDQERETEEDEGGD) are enriched in acidic residues. The tract at residues 1 to 28 (MSDQERETEEDEGGDPSDTAPMLPQRLP) is disordered. Transmembrane regions (helical) follow at residues 39–59 (GWAS…WALA), 65–85 (LLLP…VVYL), and 111–131 (AAVI…ASAA).

It belongs to the TMEM88 family.

The protein resides in the membrane. The protein is Transmembrane protein 278 (TMEM278) of Bos taurus (Bovine).